Here is a 558-residue protein sequence, read N- to C-terminus: Arginine--tRNA ligase (558 aa).

The short motif at 119–129 is the 'HIGH' region element; the sequence is ANPNGPLHVGH.

This sequence belongs to the class-I aminoacyl-tRNA synthetase family.

It localises to the cytoplasm. It carries out the reaction tRNA(Arg) + L-arginine + ATP = L-arginyl-tRNA(Arg) + AMP + diphosphate. The protein is Arginine--tRNA ligase of Methanoregula boonei (strain DSM 21154 / JCM 14090 / 6A8).